A 444-amino-acid chain; its full sequence is Glutamate--methylamine ligase (444 aa).

One can recognise a GS beta-grasp domain in the interval 14 to 97; the sequence is HHVKYVLAQF…LVCDGHVNGK (84 aa). In terms of domain architecture, GS catalytic spans 103–444; that stretch reads TRVVLKQQIA…WEINRYVQFY (342 aa).

The protein belongs to the glutamine synthetase family. Type 3 subfamily. Mg(2+) serves as cofactor.

The enzyme catalyses methylamine + L-glutamate + ATP = N(5)-methyl-L-glutamine + ADP + phosphate + H(+). The catalysed reaction is ethylamine + L-glutamate + ATP = N(5)-ethyl-L-glutamine + ADP + phosphate + H(+). Formation of theanine is repressed by a high concentration of glutamic acid. Its function is as follows. Catalyzes the formation of N(5)-methyl-L-glutamine from glutamate and methylamine. In vitro, can also use ethylamine, hydroxylamine and ammonia, with 75%, 40% and 1% activity compared to methylamine, respectively. This chain is Glutamate--methylamine ligase, found in Methylovorus mays.